The following is a 200-amino-acid chain: LexA repressor (200 aa).

A DNA-binding region (H-T-H motif) is located at residues 28 to 48 (RAEISNRLGFRSANAAEEHLK). Active-site for autocatalytic cleavage activity residues include S121 and K158.

The protein belongs to the peptidase S24 family. As to quaternary structure, homodimer.

It carries out the reaction Hydrolysis of Ala-|-Gly bond in repressor LexA.. In terms of biological role, represses a number of genes involved in the response to DNA damage (SOS response), including recA and lexA. In the presence of single-stranded DNA, RecA interacts with LexA causing an autocatalytic cleavage which disrupts the DNA-binding part of LexA, leading to derepression of the SOS regulon and eventually DNA repair. The sequence is that of LexA repressor from Hahella chejuensis (strain KCTC 2396).